Reading from the N-terminus, the 281-residue chain is uncharacterized protein (281 aa).

This is an uncharacterized protein from Bacillus subtilis (strain 168).